A 466-amino-acid polypeptide reads, in one-letter code: Glutamate decarboxylase beta (466 aa).

Substrate is bound by residues T62 and N83. Residues 126–127 (SS), T212, and H275 contribute to the pyridoxal 5'-phosphate site. The residue at position 276 (K276) is an N6-(pyridoxal phosphate)lysine. N6-acetyllysine is present on residues K446, K453, and K464.

The protein belongs to the group II decarboxylase family. Homohexamer composed of three dimers. Requires pyridoxal 5'-phosphate as cofactor.

The enzyme catalyses L-glutamate + H(+) = 4-aminobutanoate + CO2. Converts glutamate to gamma-aminobutyrate (GABA), consuming one intracellular proton in the reaction. The gad system helps to maintain a near-neutral intracellular pH when cells are exposed to extremely acidic conditions. The ability to survive transit through the acidic conditions of the stomach is essential for successful colonization of the mammalian host by commensal and pathogenic bacteria. This chain is Glutamate decarboxylase beta (gadB), found in Shigella flexneri.